A 357-amino-acid polypeptide reads, in one-letter code: Peptide chain release factor 1 (357 aa).

The residue at position 236 (Gln-236) is an N5-methylglutamine.

This sequence belongs to the prokaryotic/mitochondrial release factor family. Post-translationally, methylated by PrmC. Methylation increases the termination efficiency of RF1.

It is found in the cytoplasm. Peptide chain release factor 1 directs the termination of translation in response to the peptide chain termination codons UAG and UAA. This chain is Peptide chain release factor 1, found in Mycobacterium ulcerans (strain Agy99).